We begin with the raw amino-acid sequence, 251 residues long: MAVHLLIVDALNLIRRIHAVQGSPCVETCQHALDQLIMHSQPTHVVAVFDDENRNSGWRHQRLPDYKAGRPPMPDELHNEMPTLRAAFEQRGVPCWSATGNEADDLAATLAVKVTQAGHQATIVSTDKGYCQLLSPTLRIRDYFQKRWLDAPFIDKEFGVQPQQLPDYWGLAGISSSKVPGVAGIGPKSATQLLVEFQSLEGIYENLDAVAEKWRKKLEMHKEMAFLCRDIARLQTDVHIDGNLQQLRLKR.

D104 provides a ligand contact to Mg(2+). One can recognise a 5'-3' exonuclease domain in the interval 160-250 (VQPQQLPDYW…DGNLQQLRLK (91 aa)). K(+)-binding residues include L171, A172, P180, V182, and I185. Residues 184-189 (GIGPKS) form an interaction with DNA region.

The protein belongs to the Xni family. Mg(2+) serves as cofactor. K(+) is required as a cofactor.

Has flap endonuclease activity. During DNA replication, flap endonucleases cleave the 5'-overhanging flap structure that is generated by displacement synthesis when DNA polymerase encounters the 5'-end of a downstream Okazaki fragment. This chain is Flap endonuclease Xni, found in Escherichia fergusonii (strain ATCC 35469 / DSM 13698 / CCUG 18766 / IAM 14443 / JCM 21226 / LMG 7866 / NBRC 102419 / NCTC 12128 / CDC 0568-73).